We begin with the raw amino-acid sequence, 208 residues long: FMN-dependent NADH:quinone oxidoreductase (208 aa).

FMN-binding positions include S9, 15 to 17 (SAS), 96 to 99 (MYNF), and 140 to 143 (TRGG).

It belongs to the azoreductase type 1 family. In terms of assembly, homodimer. It depends on FMN as a cofactor.

The catalysed reaction is 2 a quinone + NADH + H(+) = 2 a 1,4-benzosemiquinone + NAD(+). It catalyses the reaction N,N-dimethyl-1,4-phenylenediamine + anthranilate + 2 NAD(+) = 2-(4-dimethylaminophenyl)diazenylbenzoate + 2 NADH + 2 H(+). Functionally, quinone reductase that provides resistance to thiol-specific stress caused by electrophilic quinones. Its function is as follows. Also exhibits azoreductase activity. Catalyzes the reductive cleavage of the azo bond in aromatic azo compounds to the corresponding amines. The protein is FMN-dependent NADH:quinone oxidoreductase of Ralstonia nicotianae (strain ATCC BAA-1114 / GMI1000) (Ralstonia solanacearum).